Reading from the N-terminus, the 189-residue chain is GTP cyclohydrolase 1 (189 aa).

Zn(2+) is bound by residues C78, H81, and C150.

It belongs to the GTP cyclohydrolase I family. As to quaternary structure, homomer.

It catalyses the reaction GTP + H2O = 7,8-dihydroneopterin 3'-triphosphate + formate + H(+). Its pathway is cofactor biosynthesis; 7,8-dihydroneopterin triphosphate biosynthesis; 7,8-dihydroneopterin triphosphate from GTP: step 1/1. This chain is GTP cyclohydrolase 1, found in Lysinibacillus sphaericus (strain C3-41).